We begin with the raw amino-acid sequence, 771 residues long: PH and SEC7 domain-containing protein 2 (771 aa).

2 disordered regions span residues 1 to 67 and 107 to 136; these read MEED…PDVA and GDNASRSLYPDAEDPQLGLDGPGEPDVRDG. The segment covering 47 to 66 has biased composition (basic and acidic residues); the sequence is GHERRGTPADTEEPTKDPDV. At Ser191 the chain carries Phosphoserine. 2 disordered regions span residues 207-230 and 244-307; these read GDMGAAGGDGELGSPLRRSISSSR and PNGF…ANGC. The segment covering 218 to 230 has biased composition (low complexity); sequence LGSPLRRSISSSR. The span at 257–266 shows a compositional bias: acidic residues; that stretch reads GDEDDDEEDT. In terms of domain architecture, SEC7 spans 260 to 462; it reads DDDEEDTDKL…KTLYNSIKNE (203 aa). The span at 288 to 299 shows a compositional bias: low complexity; it reads ELSSSEGLEPGS. The PH domain maps to 512-625; it reads TTYKHGVLTR…WILRINLVAA (114 aa). The chain crosses the membrane as a helical span at residues 622-639; the sequence is LVAAIFSAPAFPAAVSSM. A coiled-coil region spans residues 651-680; sequence TTRLCQEEQLRSHENKLRQLTAELAEHRCH. The disordered stretch occupies residues 739–771; sequence DDPSLRKTHSSPALSQGHVTGSKTTKDATGPDT. Positions 748–761 are enriched in polar residues; that stretch reads SSPALSQGHVTGSK.

This sequence belongs to the PSD family.

Its subcellular location is the cell membrane. It localises to the cell projection. The protein resides in the ruffle membrane. The protein localises to the cleavage furrow. This is PH and SEC7 domain-containing protein 2 (PSD2) from Homo sapiens (Human).